The sequence spans 232 residues: DOA4-independent degradation protein 4 (232 aa).

A coiled-coil region spans residues proline 14–arginine 97. Residues leucine 183–threonine 232 form an interaction with VPS4 region. The interval isoleucine 203–threonine 232 is disordered. The MIT-interacting motif motif lies at aspartate 219–lysine 229.

The protein belongs to the SNF7 family. As to quaternary structure, core component of the ESCRT-III complex (endosomal sorting required for transport complex III). ESCRT-III appears to be sequentially assembled as a flat lattice on the endosome membrane and forms a transient 450 kDa complex that contains DID4, oligomerized SNF7, VPS20 and VPS24. SNF7 oligomerization into a membrane-associated filament is nucleated by association of SNF7 with VPS20; the process is terminated through association of VPS24, possibly by capping the SNF7 filament. VPS24 subsequently associates with DID4/VPS2.

The protein localises to the cytoplasm. It localises to the endosome membrane. In terms of biological role, required for the sorting and concentration of proteins resulting in the entry of these proteins into the invaginating vesicles of the multivesicular body (MVB). Acts a component of the ESCRT-III complex, which appears to be critical for late steps in MVB sorting, such as membrane invagination and final cargo sorting and recruitment of late-acting components of the sorting machinery. The MVB pathway requires the sequential function of ESCRT-O, -I,-II and -III complex assemblies. Can directly stimulate VPS4 ATPase activity. The DID4/VPS2-VPS24 subcomplex is required for the VPS4-dependent dissociation of ESCRT-III. The protein is DOA4-independent degradation protein 4 (DID4) of Saccharomyces cerevisiae (strain ATCC 204508 / S288c) (Baker's yeast).